The chain runs to 413 residues: Probable N-acetyltransferase HLS1-like (413 aa).

Positions 5 to 187 (VEVREYDPSK…VNPVYAHRVN (183 aa)) constitute an N-acetyltransferase domain.

The protein belongs to the acetyltransferase family.

This is Probable N-acetyltransferase HLS1-like from Arabidopsis thaliana (Mouse-ear cress).